A 132-amino-acid polypeptide reads, in one-letter code: Fatty acid-binding protein, intestinal (132 aa).

Residue Ala-2 is modified to N-acetylalanine. Residues Trp-83 and Arg-107 each coordinate hexadecanoate. Tetradecanoate is bound by residues Trp-83 and Arg-107.

The protein belongs to the calycin superfamily. Fatty-acid binding protein (FABP) family.

It is found in the cytoplasm. In terms of biological role, FABPs are thought to play a role in the intracellular transport of long-chain fatty acids and their acyl-CoA esters. FABP2 is probably involved in triglyceride-rich lipoprotein synthesis. Binds saturated long-chain fatty acids with a high affinity, but binds with a lower affinity to unsaturated long-chain fatty acids. FABP2 may also help maintain energy homeostasis by functioning as a lipid sensor. In Bos taurus (Bovine), this protein is Fatty acid-binding protein, intestinal (FABP2).